The primary structure comprises 229 residues: Glycine betaine/carnitine/choline transport system permease protein OpuCD (229 aa).

Residues 22–202 form the ABC transmembrane type-1 domain; the sequence is FYRHFLMSVY…LMAVIADLVM (181 aa). Helical transmembrane passes span 27 to 47, 55 to 74, 78 to 100, 148 to 168, and 182 to 202; these read LMSV…GILI, GWVF…AMLA, LVMG…LPII, ALVI…GGLG, and AIIL…DLVM.

It belongs to the binding-protein-dependent transport system permease family. CysTW subfamily. As to quaternary structure, the complex is composed of two ATP-binding proteins (OpuCA), two transmembrane proteins (OpuCB and OpuCD) and a solute-binding protein (OpuCC).

The protein resides in the cell membrane. Involved in a high affinity multicomponent binding-protein-dependent transport system for glycine betaine, carnitine and choline; probably responsible for the translocation of the substrate across the membrane. The sequence is that of Glycine betaine/carnitine/choline transport system permease protein OpuCD (opuCD) from Bacillus subtilis (strain 168).